A 274-amino-acid chain; its full sequence is NH(3)-dependent NAD(+) synthetase (274 aa).

46–53 is an ATP binding site; sequence GISGGQDS. D52 provides a ligand contact to Mg(2+). Residue R140 coordinates deamido-NAD(+). T160 is an ATP binding site. Mg(2+) is bound at residue E165. 2 residues coordinate deamido-NAD(+): K173 and D180. 2 residues coordinate ATP: K189 and T211. Residue 260–261 participates in deamido-NAD(+) binding; it reads HK.

Belongs to the NAD synthetase family. Homodimer.

The enzyme catalyses deamido-NAD(+) + NH4(+) + ATP = AMP + diphosphate + NAD(+) + H(+). It functions in the pathway cofactor biosynthesis; NAD(+) biosynthesis; NAD(+) from deamido-NAD(+) (ammonia route): step 1/1. Functionally, catalyzes the ATP-dependent amidation of deamido-NAD to form NAD. Uses ammonia as a nitrogen source. This chain is NH(3)-dependent NAD(+) synthetase, found in Streptococcus sanguinis (strain SK36).